Here is a 589-residue protein sequence, read N- to C-terminus: ATP-dependent lipid A-core flippase (589 aa).

5 helical membrane passes run 29 to 49, 70 to 90, 157 to 177, 261 to 281, and 283 to 303; these read LLLVAALIAALIEAAGTTGFL, WLPVQIILLFVVRGIAGYITD, VIGALALMLWHSWQVTLTILV, MIGAIGLSALLFVAGAQALAG, and LTAGDFVVLMTSMLTIIPGLK. The region spanning 32–314 is the ABC transmembrane type-1 domain; sequence VAALIAALIE…LTNVQNMVQR (283 aa). One can recognise an ABC transporter domain in the interval 346–582; the sequence is IEFRDVTARY…GGLYSHLHGM (237 aa). 380–387 provides a ligand contact to ATP; sequence GRSGSGKS.

Belongs to the ABC transporter superfamily. Lipid exporter (TC 3.A.1.106) family. In terms of assembly, homodimer.

The protein localises to the cell inner membrane. The enzyme catalyses ATP + H2O + lipid A-core oligosaccharideSide 1 = ADP + phosphate + lipid A-core oligosaccharideSide 2.. Functionally, involved in lipopolysaccharide (LPS) biosynthesis. Translocates lipid A-core from the inner to the outer leaflet of the inner membrane. Transmembrane domains (TMD) form a pore in the inner membrane and the ATP-binding domain (NBD) is responsible for energy generation. The polypeptide is ATP-dependent lipid A-core flippase (Xanthomonas oryzae pv. oryzae (strain MAFF 311018)).